We begin with the raw amino-acid sequence, 205 residues long: Meiotic nuclear division protein 1 homolog (205 aa).

Ser2 carries the post-translational modification N-acetylserine. A coiled-coil region spans residues 84–173; that stretch reads HKLEVLESQL…EAANRWTDNI (90 aa).

It belongs to the MND1 family. As to quaternary structure, heterodimer with PSMC3IP/HOP2. MND1-PSMC3IP interacts with DMC1 and RAD51 and binds preferentially to dsDNA.

Its subcellular location is the nucleus. Its function is as follows. Required for proper homologous chromosome pairing and efficient cross-over and intragenic recombination during meiosis. Stimulates both DMC1- and RAD51-mediated homologous strand assimilation, which is required for the resolution of meiotic double-strand breaks. This is Meiotic nuclear division protein 1 homolog from Homo sapiens (Human).